A 420-amino-acid chain; its full sequence is C-methyltransferase NovU (420 aa).

This sequence belongs to the methyltransferase superfamily.

It functions in the pathway antibiotic biosynthesis; novobiocin biosynthesis. Functionally, C-methyltransferase that acts together with NovW to catalyze the formation of dTDP-4-keto-6-deoxy-5-C-methyl-L-lyxo-hexose from dTDP-4-keto-6-deoxy-D-glucose in the novobiocin biosynthesis pathway, an aminocoumarin family antibiotic that targets bacterial DNA gyrases. The polypeptide is C-methyltransferase NovU (novU) (Streptomyces niveus (Streptomyces spheroides)).